A 116-amino-acid chain; its full sequence is uncharacterized protein (116 aa).

In terms of domain architecture, HTH cro/C1-type spans 6-60; the sequence is LKKCRKQKKLTQQNMADKLGITRPAYTAYELGSREPDYKTLINISNILDVSLDYL. A DNA-binding region (H-T-H motif) is located at residues 17-36; it reads QQNMADKLGITRPAYTAYEL.

This is an uncharacterized protein from Bacillus subtilis (strain 168).